The following is a 454-amino-acid chain: Bifunctional protein GlmU (454 aa).

The pyrophosphorylase stretch occupies residues 1–226 (MALNVVILAA…AIEVEGANNR (226 aa)). UDP-N-acetyl-alpha-D-glucosamine-binding positions include 8 to 11 (LAAG), lysine 22, glutamine 73, 78 to 79 (GT), 100 to 102 (YGD), glycine 137, glutamate 151, asparagine 166, and asparagine 224. Mg(2+) is bound at residue aspartate 102. Residue asparagine 224 coordinates Mg(2+). The linker stretch occupies residues 227 to 247 (VQLAQLERAYQAREAEKLMIA). Positions 248–454 (GANLRDPSRI…GWQRPVKIKK (207 aa)) are N-acetyltransferase. The UDP-N-acetyl-alpha-D-glucosamine site is built by arginine 330 and lysine 348. The Proton acceptor role is filled by histidine 360. UDP-N-acetyl-alpha-D-glucosamine is bound by residues tyrosine 363 and asparagine 374. Residues alanine 377, 383 to 384 (NY), serine 402, alanine 420, and arginine 437 each bind acetyl-CoA.

This sequence in the N-terminal section; belongs to the N-acetylglucosamine-1-phosphate uridyltransferase family. It in the C-terminal section; belongs to the transferase hexapeptide repeat family. Homotrimer. Mg(2+) serves as cofactor.

Its subcellular location is the cytoplasm. It carries out the reaction alpha-D-glucosamine 1-phosphate + acetyl-CoA = N-acetyl-alpha-D-glucosamine 1-phosphate + CoA + H(+). It catalyses the reaction N-acetyl-alpha-D-glucosamine 1-phosphate + UTP + H(+) = UDP-N-acetyl-alpha-D-glucosamine + diphosphate. It participates in nucleotide-sugar biosynthesis; UDP-N-acetyl-alpha-D-glucosamine biosynthesis; N-acetyl-alpha-D-glucosamine 1-phosphate from alpha-D-glucosamine 6-phosphate (route II): step 2/2. Its pathway is nucleotide-sugar biosynthesis; UDP-N-acetyl-alpha-D-glucosamine biosynthesis; UDP-N-acetyl-alpha-D-glucosamine from N-acetyl-alpha-D-glucosamine 1-phosphate: step 1/1. The protein operates within bacterial outer membrane biogenesis; LPS lipid A biosynthesis. Its function is as follows. Catalyzes the last two sequential reactions in the de novo biosynthetic pathway for UDP-N-acetylglucosamine (UDP-GlcNAc). The C-terminal domain catalyzes the transfer of acetyl group from acetyl coenzyme A to glucosamine-1-phosphate (GlcN-1-P) to produce N-acetylglucosamine-1-phosphate (GlcNAc-1-P), which is converted into UDP-GlcNAc by the transfer of uridine 5-monophosphate (from uridine 5-triphosphate), a reaction catalyzed by the N-terminal domain. The chain is Bifunctional protein GlmU from Shewanella sp. (strain ANA-3).